Here is an 82-residue protein sequence, read N- to C-terminus: Small ribosomal subunit protein bS16 (82 aa).

Belongs to the bacterial ribosomal protein bS16 family.

The protein is Small ribosomal subunit protein bS16 of Serratia proteamaculans (strain 568).